Here is a 392-residue protein sequence, read N- to C-terminus: Formate-dependent phosphoribosylglycinamide formyltransferase (392 aa).

N(1)-(5-phospho-beta-D-ribosyl)glycinamide-binding positions include 22–23 (EL) and Glu82. Residues Arg114, Lys155, 160–165 (SSGKGQ), 195–198 (EGVV), and Glu203 each bind ATP. The region spanning 119–308 (RLAAEELQLP…EFALHVRAFL (190 aa)) is the ATP-grasp domain. Residues Glu267 and Glu279 each coordinate Mg(2+). Residues Asp286, Lys355, and 362–363 (RR) contribute to the N(1)-(5-phospho-beta-D-ribosyl)glycinamide site.

It belongs to the PurK/PurT family. Homodimer.

It carries out the reaction N(1)-(5-phospho-beta-D-ribosyl)glycinamide + formate + ATP = N(2)-formyl-N(1)-(5-phospho-beta-D-ribosyl)glycinamide + ADP + phosphate + H(+). Its pathway is purine metabolism; IMP biosynthesis via de novo pathway; N(2)-formyl-N(1)-(5-phospho-D-ribosyl)glycinamide from N(1)-(5-phospho-D-ribosyl)glycinamide (formate route): step 1/1. Its function is as follows. Involved in the de novo purine biosynthesis. Catalyzes the transfer of formate to 5-phospho-ribosyl-glycinamide (GAR), producing 5-phospho-ribosyl-N-formylglycinamide (FGAR). Formate is provided by PurU via hydrolysis of 10-formyl-tetrahydrofolate. This is Formate-dependent phosphoribosylglycinamide formyltransferase from Shigella sonnei (strain Ss046).